Reading from the N-terminus, the 486-residue chain is Alpha-L-arabinofuranosidase B (486 aa).

The N-terminal stretch at Met-1–Ala-25 is a signal peptide. Asn-42 carries N-linked (GlcNAc...) asparagine glycosylation. The interval Leu-45–Pro-342 is catalytic. The active-site Proton acceptor is Asp-51. Glu-229 functions as the Proton donor in the catalytic mechanism. Asn-302, Asn-416, and Asn-426 each carry an N-linked (GlcNAc...) asparagine glycan. An ABD region spans residues Ser-359–Asn-467.

This sequence belongs to the glycosyl hydrolase 43 family.

It localises to the secreted. It carries out the reaction Hydrolysis of terminal non-reducing alpha-L-arabinofuranoside residues in alpha-L-arabinosides.. Its pathway is glycan metabolism; L-arabinan degradation. Its function is as follows. Secreted arabinofuranosidase that causes degradation of rice cell wall components during infection. Required for virulence. The sequence is that of Alpha-L-arabinofuranosidase B from Pyricularia oryzae (strain 70-15 / ATCC MYA-4617 / FGSC 8958) (Rice blast fungus).